A 225-amino-acid chain; its full sequence is C-reactive protein (225 aa).

An N-terminal signal peptide occupies residues 1-19 (MEKLLWCLLIMISFSRTFG). A Pentraxin (PTX) domain is found at 24–225 (FKKAFVFPKE…DVFIKPQLWS (202 aa)). Cys-55 and Cys-116 form a disulfide bridge. Asn-80, Glu-157, Gln-158, Asp-159, and Gln-169 together coordinate Ca(2+).

Belongs to the pentraxin family. Homopentamer. Pentraxin (or pentaxin) have a discoid arrangement of 5 non-covalently bound subunits. Interacts with FCN1; may regulate monocyte activation by FCN1. The cofactor is Ca(2+). In terms of tissue distribution, found in plasma.

It is found in the secreted. In terms of biological role, displays several functions associated with host defense: it promotes agglutination, bacterial capsular swelling, phagocytosis and complement fixation through its calcium-dependent binding to phosphorylcholine. Can interact with DNA and histones and may scavenge nuclear material released from damaged circulating cells. The polypeptide is C-reactive protein (Crp) (Mus musculus (Mouse)).